We begin with the raw amino-acid sequence, 332 residues long: Probable allantoicase (332 aa).

The protein belongs to the allantoicase family.

It catalyses the reaction allantoate + H2O = (S)-ureidoglycolate + urea. Its pathway is nitrogen metabolism; (S)-allantoin degradation; (S)-ureidoglycolate from allantoate (aminidohydrolase route): step 1/1. This Pseudomonas aeruginosa (strain LESB58) protein is Probable allantoicase.